The primary structure comprises 456 residues: Bifunctional protein GlmU (456 aa).

A pyrophosphorylase region spans residues 1–229 (MLNNAMSVVI…LSEVEGVNNR (229 aa)). UDP-N-acetyl-alpha-D-glucosamine-binding positions include 11 to 14 (LAAG), K25, Q76, 81 to 82 (GT), 103 to 105 (YGD), G140, E154, N169, and N227. Residue D105 coordinates Mg(2+). N227 contacts Mg(2+). The tract at residues 230-250 (LQLSRLERVYQSEQAEKLLLA) is linker. Positions 251–456 (GVMLRDPARF…EGWRRPVKKK (206 aa)) are N-acetyltransferase. UDP-N-acetyl-alpha-D-glucosamine is bound by residues R333 and K351. Residue H363 is the Proton acceptor of the active site. The UDP-N-acetyl-alpha-D-glucosamine site is built by Y366 and N377. Acetyl-CoA-binding positions include A380, 386–387 (NY), S405, A423, and R440.

In the N-terminal section; belongs to the N-acetylglucosamine-1-phosphate uridyltransferase family. This sequence in the C-terminal section; belongs to the transferase hexapeptide repeat family. Homotrimer. Mg(2+) is required as a cofactor.

It is found in the cytoplasm. The enzyme catalyses alpha-D-glucosamine 1-phosphate + acetyl-CoA = N-acetyl-alpha-D-glucosamine 1-phosphate + CoA + H(+). The catalysed reaction is N-acetyl-alpha-D-glucosamine 1-phosphate + UTP + H(+) = UDP-N-acetyl-alpha-D-glucosamine + diphosphate. It functions in the pathway nucleotide-sugar biosynthesis; UDP-N-acetyl-alpha-D-glucosamine biosynthesis; N-acetyl-alpha-D-glucosamine 1-phosphate from alpha-D-glucosamine 6-phosphate (route II): step 2/2. The protein operates within nucleotide-sugar biosynthesis; UDP-N-acetyl-alpha-D-glucosamine biosynthesis; UDP-N-acetyl-alpha-D-glucosamine from N-acetyl-alpha-D-glucosamine 1-phosphate: step 1/1. It participates in bacterial outer membrane biogenesis; LPS lipid A biosynthesis. In terms of biological role, catalyzes the last two sequential reactions in the de novo biosynthetic pathway for UDP-N-acetylglucosamine (UDP-GlcNAc). The C-terminal domain catalyzes the transfer of acetyl group from acetyl coenzyme A to glucosamine-1-phosphate (GlcN-1-P) to produce N-acetylglucosamine-1-phosphate (GlcNAc-1-P), which is converted into UDP-GlcNAc by the transfer of uridine 5-monophosphate (from uridine 5-triphosphate), a reaction catalyzed by the N-terminal domain. This chain is Bifunctional protein GlmU, found in Escherichia coli O157:H7 (strain EC4115 / EHEC).